We begin with the raw amino-acid sequence, 255 residues long: tRNA (guanine-N(7)-)-methyltransferase (255 aa).

The segment covering 1–11 (MSISDNSRDQL) has biased composition (basic and acidic residues). The disordered stretch occupies residues 1 to 25 (MSISDNSRDQLGELPAGRPLQSDFD). S-adenosyl-L-methionine contacts are provided by glutamate 83, glutamate 108, aspartate 135, and aspartate 158. Residue aspartate 158 is part of the active site. Lysine 162 contributes to the substrate binding site. The interaction with RNA stretch occupies residues 164-169 (RHNKRR). Substrate is bound by residues aspartate 194 and 232–235 (TKFE).

Belongs to the class I-like SAM-binding methyltransferase superfamily. TrmB family.

It carries out the reaction guanosine(46) in tRNA + S-adenosyl-L-methionine = N(7)-methylguanosine(46) in tRNA + S-adenosyl-L-homocysteine. Its pathway is tRNA modification; N(7)-methylguanine-tRNA biosynthesis. Catalyzes the formation of N(7)-methylguanine at position 46 (m7G46) in tRNA. This is tRNA (guanine-N(7)-)-methyltransferase from Corynebacterium glutamicum (strain ATCC 13032 / DSM 20300 / JCM 1318 / BCRC 11384 / CCUG 27702 / LMG 3730 / NBRC 12168 / NCIMB 10025 / NRRL B-2784 / 534).